A 1467-amino-acid chain; its full sequence is Helicase ARIP4 (1467 aa).

Disordered regions lie at residues 1–150 (MSDE…YAAP) and 186–234 (DSSS…GGTH). Acidic residues predominate over residues 11–49 (PDLDPDVELEDAEEEEEEEEVAVEECDRDDEEDLLDDPS). Over residues 72-82 (TSTTSSQSEPS) the composition is skewed to low complexity. Residues 100–115 (KKRAQKPSHMRRNIRK) show a composition bias toward basic residues. Residues lysine 115 and lysine 127 each participate in a glycyl lysine isopeptide (Lys-Gly) (interchain with G-Cter in SUMO2) cross-link. 2 stretches are compositionally biased toward basic and acidic residues: residues 133-147 (ELERRKRLEQQRKDY) and 192-201 (EDEKSSRDEV). A Glycyl lysine isopeptide (Lys-Gly) (interchain with G-Cter in SUMO2) cross-link involves residue lysine 272. A Helicase ATP-binding domain is found at 292–512 (RFKTSSGFGC…WCMVDFVRPD (221 aa)). ATP is bound at residue 305 to 312 (HSMGLGKT). A DEAH box motif is present at residues 463–466 (DEGH). The LXXLL motif 1 signature appears at 551–555 (LHSLL). The tract at residues 649–673 (GSAGTSARCPPQGTKGKGEDSTLAS) is disordered. Glycyl lysine isopeptide (Lys-Gly) (interchain with G-Cter in SUMO2) cross-links involve residues lysine 665, lysine 682, lysine 759, lysine 901, lysine 1014, and lysine 1018. One can recognise a Helicase C-terminal domain in the interval 728–896 (HLIEESVKLG…RVVDDLNPML (169 aa)). Residues 1120–1171 (RATGKPKVPEDGRMAASGSQGPSCESTSNGRHSASSPKAPDPEGLARPVSPD) are disordered. A compositionally biased stretch (polar residues) spans 1136-1155 (SGSQGPSCESTSNGRHSASS). 2 positions are modified to phosphoserine: serine 1169 and serine 1172. Disordered stretches follow at residues 1184–1221 (DVAAARESRQSSPSTNAALPGPPAQLMDSSAVPGTALG) and 1247–1284 (PVLDLRGHKRKLATPPAAQESSRRRSRKGHLPAPVQPY). At threonine 1260 the chain carries Phosphothreonine. The short motif at 1329-1333 (LSNLL) is the LXXLL motif 2 element. The interval 1445–1467 (AEVGFSSNDDEDKDDDVIEVTGK) is disordered. Acidic residues predominate over residues 1452–1467 (NDDEDKDDDVIEVTGK).

Belongs to the SNF2/RAD54 helicase family. As to quaternary structure, interacts with AR via its N-terminus. Interacts with DYRK1A. Binds DNA and mononucleosomes, but does not seem to form large multiprotein complexes. In terms of processing, sumoylated.

It is found in the nucleus. The catalysed reaction is ATP + H2O = ADP + phosphate + H(+). Its activity is regulated as follows. Enzyme activity is enhanced by dsDNA (double-stranded DNA) and ssDNA (single-stranded DNA). DNA helicase that modulates androgen receptor (AR)-dependent transactivation in a promoter-dependent manner. Not able to remodel mononucleosomes in vitro. This Homo sapiens (Human) protein is Helicase ARIP4 (RAD54L2).